A 297-amino-acid polypeptide reads, in one-letter code: UDP-N-acetylenolpyruvoylglucosamine reductase (297 aa).

The 174-residue stretch at Arg-22–Gly-195 folds into the FAD-binding PCMH-type domain. The active site involves Arg-169. Catalysis depends on Ser-223, which acts as the Proton donor. Residue Glu-293 is part of the active site.

The protein belongs to the MurB family. FAD is required as a cofactor.

The protein resides in the cytoplasm. It catalyses the reaction UDP-N-acetyl-alpha-D-muramate + NADP(+) = UDP-N-acetyl-3-O-(1-carboxyvinyl)-alpha-D-glucosamine + NADPH + H(+). It functions in the pathway cell wall biogenesis; peptidoglycan biosynthesis. Cell wall formation. This is UDP-N-acetylenolpyruvoylglucosamine reductase from Chloroflexus aurantiacus (strain ATCC 29364 / DSM 637 / Y-400-fl).